We begin with the raw amino-acid sequence, 163 residues long: Phosphopantetheine adenylyltransferase (163 aa).

Ser-10 contacts substrate. ATP-binding positions include 10-11 (SF) and His-18. Residues Lys-42, Leu-74, and Arg-88 each coordinate substrate. Residues 89–91 (GLR), Glu-99, and 124–130 (YSFLSSS) contribute to the ATP site.

The protein belongs to the bacterial CoaD family. In terms of assembly, homohexamer. It depends on Mg(2+) as a cofactor.

It is found in the cytoplasm. It carries out the reaction (R)-4'-phosphopantetheine + ATP + H(+) = 3'-dephospho-CoA + diphosphate. Its pathway is cofactor biosynthesis; coenzyme A biosynthesis; CoA from (R)-pantothenate: step 4/5. Reversibly transfers an adenylyl group from ATP to 4'-phosphopantetheine, yielding dephospho-CoA (dPCoA) and pyrophosphate. This chain is Phosphopantetheine adenylyltransferase, found in Bacillus cereus (strain G9842).